Here is a 475-residue protein sequence, read N- to C-terminus: MIQIMNWFSMVIGLIPLNRQQSETNFILDYAMMCIVPIFYVACYLLINLSHIIGLCLLDSCNSVCKLSSHLFMHLGAFLYLTITLLSLYRRKEFFQQFDARLNDIDAVIQKCQRVAEMDKVKVTAVKHSVAYHFTWLFLFCVFTFALYYDVRSLYLTFGNLAFIPFMVSSFPYLAGSIIQGEFIYHVSVISQRFEQINMLLEKINQEARHRHAPLTVFDIESEGKKERKTVTPITVMDGRTTTGFGNENKFAGEMKRQEGQQKNDDDDLDTSNDEDEDDFDYDNATIAENTGNTSEANLPDLFKLHDKILALSVITNGEFGPQCVPYMAACFVVSIFGIFLETKVNFIVGGKSRLLDYMTYLYVIWSFTTMMVAYIVLRLCCNANNHSKQSAMIVHEIMQKKPAFMLSNDLFYNKMKSFTLQFLHWEGFFQFNGVGLFALDYTFIFSTVSAATSYLIVLLQFDMTAILRNEGLMS.

At 1 to 34 the chain is on the cytoplasmic side; it reads MIQIMNWFSMVIGLIPLNRQQSETNFILDYAMMC. Residues 35-55 traverse the membrane as a helical segment; that stretch reads IVPIFYVACYLLINLSHIIGL. Residues 56–68 are Extracellular-facing; it reads CLLDSCNSVCKLS. A helical membrane pass occupies residues 69 to 89; that stretch reads SHLFMHLGAFLYLTITLLSLY. Residues 90–128 are Cytoplasmic-facing; the sequence is RRKEFFQQFDARLNDIDAVIQKCQRVAEMDKVKVTAVKH. A helical membrane pass occupies residues 129-149; it reads SVAYHFTWLFLFCVFTFALYY. Topologically, residues 150–158 are extracellular; the sequence is DVRSLYLTF. The helical transmembrane segment at 159–179 threads the bilayer; that stretch reads GNLAFIPFMVSSFPYLAGSII. At 180–319 the chain is on the cytoplasmic side; it reads QGEFIYHVSV…LALSVITNGE (140 aa). The disordered stretch occupies residues 243 to 281; the sequence is TGFGNENKFAGEMKRQEGQQKNDDDDLDTSNDEDEDDFD. Positions 251-264 are enriched in basic and acidic residues; the sequence is FAGEMKRQEGQQKN. Positions 265-281 are enriched in acidic residues; the sequence is DDDDLDTSNDEDEDDFD. Residues 320–340 form a helical membrane-spanning segment; sequence FGPQCVPYMAACFVVSIFGIF. The Extracellular portion of the chain corresponds to 341–357; sequence LETKVNFIVGGKSRLLD. A helical transmembrane segment spans residues 358–378; that stretch reads YMTYLYVIWSFTTMMVAYIVL. Residues 379–441 lie on the Cytoplasmic side of the membrane; sequence RLCCNANNHS…FNGVGLFALD (63 aa). The chain crosses the membrane as a helical span at residues 442-462; it reads YTFIFSTVSAATSYLIVLLQF. Residues 463-475 are Extracellular-facing; the sequence is DMTAILRNEGLMS.

It belongs to the insect chemoreceptor superfamily. Gustatory receptor (GR) family. Gr66a subfamily. In terms of tissue distribution, expressed widely in gustatory receptor neurons (GRNs) that respond to aversive chemicals. In larvae, is expressed in neurons of the terminal external chemosensory organ, and the dorsal, ventral and posterior external chemosensory organs.

It localises to the cell membrane. Functionally, gustatory receptor which mediates acceptance or avoidance behavior, depending on its substrates. Required for sensing all nonvolatile repulsive chemicals, including tastants, pheromones, and especially N,N-Diethyl-meta-toluamide (DEET), the most widely used insect repellent worldwide. Also functions as a pheromone receptor for a male inhibitory pheromone leading to male-male courtship suppression. This Drosophila melanogaster (Fruit fly) protein is Gustatory and pheromone receptor 33a (Gr33a).